The following is a 580-amino-acid chain: Mucolipin-1 (580 aa).

The segment at 1–38 (MTDPAGPRGSETERLLTPNPGYGTQVGPSPAPPTPPEE) is disordered. Over 1–65 (MTDPAGPRGS…FRAKGRKPCK (65 aa)) the chain is Cytoplasmic. S10 carries the phosphoserine modification. The short motif at 11-16 (ETERLL) is the Dileucine motif; mediates targeting to lysosomes element. The segment at 42–62 (RRRLKYFFMSPCDKFRAKGRK) is interaction with phosphoinositides. Residues 66 to 86 (LMLQVVKILVVTVQLILFGLS) traverse the membrane as a helical segment. Residues 87–298 (NQLAVTFREE…VFRHGDNSFR (212 aa)) are Extracellular-facing. The segment at 107-121 (LGYSDGADDTFAAYT) is extracellular/lumenal pore loop. Cysteines 166 and 192 form a disulfide. N230 is a glycosylation site (N-linked (GlcNAc...) asparagine). Cysteines 253 and 284 form a disulfide. Residues 299 to 321 (LLFDVVVILTCSLSFLLCARSLL) form a helical membrane-spanning segment. Over 322-350 (RGFLLQNEFVRFMWRQRRRVISLWERLEF) the chain is Cytoplasmic. Residues 351 to 371 (VNGWYILLVTSDVLTISGTIM) form a helical membrane-spanning segment. Topologically, residues 372-382 (KIGIEAKNLAS) are extracellular. A helical transmembrane segment spans residues 383-405 (YDVCSILLGTSTLLVWVGVIRYL). The Cytoplasmic portion of the chain corresponds to 406–427 (TFFHNYNILIATLRVALPSVMR). A helical membrane pass occupies residues 428–448 (FCCCVAVIYLGYCFCGWIVLG). At 449–456 (PYHVKFRS) the chain is on the extracellular side. Positions 457 to 477 (LSMVSECLFSLINGDDMFVTF) form an intramembrane region, pore-forming. The Selectivity filter signature appears at 469-474 (NGDDMF). Residues 478–491 (AAMQAQQGRSSLVW) lie on the Extracellular side of the membrane. Residues 492-513 (LFSQLYLYSFISLFIYMVLSLF) form a helical membrane-spanning segment. Topologically, residues 514 to 580 (IALITGAYDT…PSEEHSLLVN (67 aa)) are cytoplasmic. Residues S557 and S559 each carry the phosphoserine; by PAK modification. The required for palmitoylation and association with membranes stretch occupies residues 565-567 (CCC). The short motif at 573–578 (EEHSLL) is the Dileucine internalization motif; mediates AP2 complex-dependent internalization element.

This sequence belongs to the transient receptor (TC 1.A.4) family. Polycystin subfamily. MCOLN1 sub-subfamily. As to quaternary structure, homotetramer. Homooligomer. Can heterooligomerize with MCOLN2 or MCOLN3; heteromeric assemblies have different channel properties as compared to the respective homooligomers and may be tissue-specific. Interacts with PDCD6. Interacts with TMEM163. Interacts with LAPTM4B. In terms of processing, palmitoylated; involved in association with membranes. Phosphorylation by PKA inhibits channel activity. Dephosphorylation increases activity. Post-translationally, proteolytically cleaved probably involving multiple lysosomal proteases including cathepsin B; inhibits lysosomal channel activity.

The protein resides in the late endosome membrane. Its subcellular location is the lysosome membrane. It is found in the cytoplasmic vesicle membrane. The protein localises to the cell projection. It localises to the phagocytic cup. The protein resides in the cytoplasmic vesicle. Its subcellular location is the phagosome membrane. It is found in the cell membrane. It carries out the reaction Ca(2+)(in) = Ca(2+)(out). The enzyme catalyses Fe(2+)(in) = Fe(2+)(out). It catalyses the reaction Mg(2+)(in) = Mg(2+)(out). The catalysed reaction is K(+)(in) = K(+)(out). It carries out the reaction Na(+)(in) = Na(+)(out). Its activity is regulated as follows. Channel activity is controlled by multiple regulatory mechanisms in different subcellular compartments. Channel function is transiently modulated by changes in Ca(2+) in a pH-dependent manner; pH changes modify the aggregation state of unitary channels; a negative cooperativity between extracellular/lumenal Ca(2+) and H(+) is suggested. Regulated by phosphoinositides in a compartment-specific manner: in lysosomes activated by PtdIns(3,5)P2 (Phosphatidylinositol 3,5-bisphosphate) and at the plasma membrane inhibited by PtdIns(4,5)P2 (Phosphatidylinositol 4,5-bisphosphate). Its function is as follows. Nonselective cation channel probably playing a role in the regulation of membrane trafficking events and of metal homeostasis. Acts as a Ca(2+)-permeable cation channel with inwardly rectifying activity. Proposed to play a major role in Ca(2+) release from late endosome and lysosome vesicles to the cytoplasm, which is important for many lysosome-dependent cellular events, including the fusion and trafficking of these organelles, exocytosis and autophagy. Required for efficient uptake of large particles in macrophages in which Ca(2+) release from the lysosomes triggers lysosomal exocytosis. May also play a role in phagosome-lysosome fusion. Involved in lactosylceramide trafficking indicative for a role in the regulation of late endocytic membrane fusion/fission events. By mediating lysosomal Ca(2+) release is involved in regulation of mTORC1 signaling and in mTOR/TFEB-dependent lysosomal adaptation to environmental cues such as nutrient levels. Seems to act as lysosomal active oxygen species (ROS) sensor involved in ROS-induced TFEB activation and autophagy. Also functions as a Fe(2+) permeable channel in late endosomes and lysosomes. Also permeable to Mg(2+), Na(+). K(+) and Cs(+). Proposed to play a role in zinc homeostasis probably implicating its association with TMEM163. In adaptive immunity, TRPML2 and TRPML1 may play redundant roles in the function of the specialized lysosomes of B cells. Functionally, may contribute to cellular lipase activity within the late endosomal pathway or at the cell surface which may be involved in processes of membrane reshaping and vesiculation, especially the growth of tubular structures. However, it is not known, whether it conveys the enzymatic activity directly, or merely facilitates the activity of an associated phospholipase. The polypeptide is Mucolipin-1 (MCOLN1) (Macaca fascicularis (Crab-eating macaque)).